The primary structure comprises 601 residues: Phosphomethylpyrimidine synthase (601 aa).

Disordered stretches follow at residues 1 to 31 and 100 to 141; these read MTNK…GKSI and AGRP…RDGQ. Positions 100–112 are enriched in basic and acidic residues; that stretch reads AGRPVRPEDDGIK. Residues N208, M237, Y266, H302, 322 to 324, 363 to 366, and E402 contribute to the substrate site; these read SRG and DGLR. Residue H406 coordinates Zn(2+). Y429 contacts substrate. H470 provides a ligand contact to Zn(2+). The [4Fe-4S] cluster site is built by C550, C553, and C558.

Belongs to the ThiC family. [4Fe-4S] cluster serves as cofactor.

It carries out the reaction 5-amino-1-(5-phospho-beta-D-ribosyl)imidazole + S-adenosyl-L-methionine = 4-amino-2-methyl-5-(phosphooxymethyl)pyrimidine + CO + 5'-deoxyadenosine + formate + L-methionine + 3 H(+). It functions in the pathway cofactor biosynthesis; thiamine diphosphate biosynthesis. Functionally, catalyzes the synthesis of the hydroxymethylpyrimidine phosphate (HMP-P) moiety of thiamine from aminoimidazole ribotide (AIR) in a radical S-adenosyl-L-methionine (SAM)-dependent reaction. The protein is Phosphomethylpyrimidine synthase of Streptomyces avermitilis (strain ATCC 31267 / DSM 46492 / JCM 5070 / NBRC 14893 / NCIMB 12804 / NRRL 8165 / MA-4680).